The primary structure comprises 433 residues: MWDIAKVKASIKPFVFALGRFFGNLYKEFVEKGCQKSAAALTYMSLFAMVPLMAVFYSMFSMFPAFDGVAQQLQDMIFSHFVPETGSEVQQYLANFSQQARNLSAAGAGLLVVTAYLMLTNIEKTFNAIWGVKAARRGITSFLLYWAVLTIGPLLLGAGLAMSTYLLSLKIIVNEYDAIGVTNLFFSYLPLFTTSAAFTLLFAAVPNCRVPIKFALIGGILTAVCFELLKIGFGWVVANSSFSQIYGAFAVVPLFLLWVNLLWMIILGGAVFVRTLAERGYAHSSSRYTDLMAVLQILAIFKEKSRTGESVTDGDCVRAGVGLVHWQQLRSKLTEKNWIAVTDSGFYVLCRDLSDVTVWDAACLVGATLAELEKTPRKRSRDGEWREEFSKRKDLLADDAKAHYGISLQALFSPQQVEELLEELPDEQSEKSK.

6 consecutive transmembrane segments (helical) span residues 46–66, 103–123, 142–162, 185–205, 217–237, and 247–267; these read LFAMVPLMAVFYSMFSMFPAF, LSAAGAGLLVVTAYLMLTNIE, FLLYWAVLTIGPLLLGAGLAM, FFSYLPLFTTSAAFTLLFAAV, IGGILTAVCFELLKIGFGWVV, and GAFAVVPLFLLWVNLLWMIIL.

It belongs to the UPF0761 family.

The protein localises to the cell inner membrane. The polypeptide is UPF0761 membrane protein Sde_0901 (Saccharophagus degradans (strain 2-40 / ATCC 43961 / DSM 17024)).